A 740-amino-acid polypeptide reads, in one-letter code: ATP-dependent RNA helicase DDX1 (740 aa).

The interval Met1–Ser295 is necessary for interaction with HNRNPK. Positions Met1–Val448 are interaction with dsRNA. The tract at residues Met1–Tyr525 is necessary for interaction with RELA. The 427-residue stretch at Ala2–Trp428 folds into the Helicase ATP-binding domain. Ala46–Thr53 provides a ligand contact to ATP. Residues Asp70–Phe247 enclose the B30.2/SPRY domain. An N6-acetyllysine mark is found at Lys239 and Lys268. Lys281 is subject to N6-acetyllysine; alternate. A Glycyl lysine isopeptide (Lys-Gly) (interchain with G-Cter in SUMO2); alternate cross-link involves residue Lys281. The short motif at Asp370–Asp373 is the DEAD box element. Position 481 is a phosphoserine (Ser481). In terms of domain architecture, Helicase C-terminal spans Lys493 to Val681. Positions Tyr525 to Phe740 are necessary for interaction with HNRNPK.

Belongs to the DEAD box helicase family. DDX1 subfamily. Found in a multi-helicase-TICAM1 complex at least composed of DHX36, DDX1, DDX21 and TICAM1; this complex exists in resting cells with or without poly(I:C) RNA ligand stimulation. Interacts with DHX36. Interacts (via B30.2/SPRY domain) with DDX21 (via N-terminus); this interaction serves as bridges to TICAM1. Interacts with FAM98A (via N- and C-terminus). Interacts with PHF5A (via C-terminus). Interacts with MBNL1. Interacts with CSTF2. Interacts with HNRNPK. Interacts with ATM. Interacts with RELA (via C-terminus). Component of the tRNA-splicing ligase complex. Interacts with PQBP1. Interacts with ERCC6. Post-translationally, phosphorylated by ATM kinase; phosphorylation is increased in response to ionizing radiation (IR).

It localises to the nucleus. It is found in the cytoplasm. The protein resides in the cytoplasmic granule. Its subcellular location is the cytosol. The protein localises to the mitochondrion. The enzyme catalyses ATP + H2O = ADP + phosphate + H(+). Its function is as follows. Acts as an ATP-dependent RNA helicase, able to unwind both RNA-RNA and RNA-DNA duplexes. Possesses 5' single-stranded RNA overhang nuclease activity. Possesses ATPase activity on various RNA, but not DNA polynucleotides. May play a role in RNA clearance at DNA double-strand breaks (DSBs), thereby facilitating the template-guided repair of transcriptionally active regions of the genome. Together with RELA, acts as a coactivator to enhance NF-kappa-B-mediated transcriptional activation. Acts as a positive transcriptional regulator of cyclin CCND2 expression. Binds to the cyclin CCND2 promoter region. Associates with chromatin at the NF-kappa-B promoter region via association with RELA. Binds to poly(A) RNA. May be involved in 3'-end cleavage and polyadenylation of pre-mRNAs. Component of the tRNA-splicing ligase complex required to facilitate the enzymatic turnover of catalytic subunit RTCB: together with archease (ZBTB8OS), acts by facilitating the guanylylation of RTCB, a key intermediate step in tRNA ligation. Component of a multi-helicase-TICAM1 complex that acts as a cytoplasmic sensor of viral double-stranded RNA (dsRNA) and plays a role in the activation of a cascade of antiviral responses including the induction of pro-inflammatory cytokines via the adapter molecule TICAM1. Specifically binds (via helicase ATP-binding domain) on both short and long poly(I:C) dsRNA. The polypeptide is ATP-dependent RNA helicase DDX1 (Ddx1) (Rattus norvegicus (Rat)).